The chain runs to 418 residues: CinA-like protein (418 aa).

Belongs to the CinA family.

This Leptospira borgpetersenii serovar Hardjo-bovis (strain L550) protein is CinA-like protein.